A 76-amino-acid polypeptide reads, in one-letter code: Sec-independent protein translocase protein TatA (76 aa).

A helical transmembrane segment spans residues 1–21 (MGGISIWQLLIIVAIIVLLFG). Positions 43-76 (MADDKSQPQDASFEKVEAKEAASTEQKAKEKEQA) are disordered.

It belongs to the TatA/E family. In terms of assembly, the Tat system comprises two distinct complexes: a TatABC complex, containing multiple copies of TatA, TatB and TatC subunits, and a separate TatA complex, containing only TatA subunits. Substrates initially bind to the TatABC complex, which probably triggers association of the separate TatA complex to form the active translocon.

It localises to the cell inner membrane. Functionally, part of the twin-arginine translocation (Tat) system that transports large folded proteins containing a characteristic twin-arginine motif in their signal peptide across membranes. TatA could form the protein-conducting channel of the Tat system. The chain is Sec-independent protein translocase protein TatA from Actinobacillus pleuropneumoniae serotype 5b (strain L20).